We begin with the raw amino-acid sequence, 121 residues long: Heme-degrading monooxygenase (121 aa).

One can recognise an ABM domain in the interval 2–101; the sequence is IIVTNTIKVE…EQREDRKGIV (100 aa). N6 contacts Fe cation. The interval 76-98 is disordered; the sequence is KSDSFKKAHGRTKDTREQREDRK. The segment covering 78-98 has biased composition (basic and acidic residues); the sequence is DSFKKAHGRTKDTREQREDRK. H84 is a binding site for heme.

This sequence belongs to the antibiotic biosynthesis monooxygenase family. Heme-degrading monooxygenase IsdG subfamily. In terms of assembly, homodimer.

The protein localises to the cytoplasm. The enzyme catalyses heme b + 3 reduced [NADPH--hemoprotein reductase] + 3 O2 = biliverdin IXalpha + CO + Fe(2+) + 3 oxidized [NADPH--hemoprotein reductase] + 3 H2O + H(+). In terms of biological role, allows bacterial pathogens to use the host heme as an iron source. Catalyzes the oxidative degradation of the heme macrocyclic porphyrin ring to the biliverdin in the presence of a suitable electron donor such as ascorbate or NADPH--cytochrome P450 reductase, with subsequent release of free iron. The polypeptide is Heme-degrading monooxygenase (Listeria welshimeri serovar 6b (strain ATCC 35897 / DSM 20650 / CCUG 15529 / CIP 8149 / NCTC 11857 / SLCC 5334 / V8)).